The following is a 338-amino-acid chain: 3-isopropylmalate dehydrogenase (338 aa).

Positions 88, 98, 122, and 212 each coordinate substrate. Mg(2+) contacts are provided by Asp-212, Asp-236, and Asp-240. 272 to 284 (GSAPDIAGQGIAD) is an NAD(+) binding site.

It belongs to the isocitrate and isopropylmalate dehydrogenases family. LeuB type 2 subfamily. As to quaternary structure, homodimer. It depends on Mg(2+) as a cofactor. Mn(2+) serves as cofactor.

It localises to the cytoplasm. The catalysed reaction is (2R,3S)-3-isopropylmalate + NAD(+) = 4-methyl-2-oxopentanoate + CO2 + NADH. The protein operates within amino-acid biosynthesis; L-leucine biosynthesis; L-leucine from 3-methyl-2-oxobutanoate: step 3/4. Catalyzes the oxidation of 3-carboxy-2-hydroxy-4-methylpentanoate (3-isopropylmalate) to 3-carboxy-4-methyl-2-oxopentanoate. The product decarboxylates to 4-methyl-2 oxopentanoate. The sequence is that of 3-isopropylmalate dehydrogenase from Corynebacterium jeikeium (strain K411).